Reading from the N-terminus, the 608-residue chain is Protein UL27 (608 aa).

Over residues 1–13 (MNPVDQPPPPLPT) the composition is skewed to pro residues. The interval 1 to 33 (MNPVDQPPPPLPTQQPEEQAKEDHDDGDERLFR) is disordered. Basic and acidic residues predominate over residues 18–33 (EQAKEDHDDGDERLFR).

The protein belongs to the herpesviridae U4 family. In terms of assembly, interacts with host KAT5, PSME3 and EP400.

Its subcellular location is the host nucleus. It localises to the host nucleolus. In terms of biological role, promotes a cell cycle arrest in G0/G1 by inducing the proteasomal degradation of host histone acetyltransferase KAT5/Tip60. The polypeptide is Protein UL27 (UL27) (Human cytomegalovirus (strain AD169) (HHV-5)).